An 868-amino-acid chain; its full sequence is Translation initiation factor IF-2 (868 aa).

Basic and acidic residues-rich tracts occupy residues 156 to 166 (ETVKEEEKINS) and 199 to 209 (SKKEEVKPEKV). 2 disordered regions span residues 156–177 (ETVK…QDEL) and 199–269 (SKKE…KYRE). Residues 249–260 (RGGRSKFKKKKG) are compositionally biased toward basic residues. Residues 368–537 (GRAPVVTIMG…LLQSEVLELK (170 aa)) enclose the tr-type G domain. The G1 stretch occupies residues 377 to 384 (GHVDHGKT). 377–384 (GHVDHGKT) contributes to the GTP binding site. The G2 stretch occupies residues 402 to 406 (GITQH). The G3 stretch occupies residues 423 to 426 (DTPG). GTP contacts are provided by residues 423–427 (DTPGH) and 477–480 (NKMD). Residues 477-480 (NKMD) form a G4 region. Residues 513–515 (SAK) form a G5 region.

It belongs to the TRAFAC class translation factor GTPase superfamily. Classic translation factor GTPase family. IF-2 subfamily.

The protein resides in the cytoplasm. Functionally, one of the essential components for the initiation of protein synthesis. Protects formylmethionyl-tRNA from spontaneous hydrolysis and promotes its binding to the 30S ribosomal subunits. Also involved in the hydrolysis of GTP during the formation of the 70S ribosomal complex. In Legionella pneumophila subsp. pneumophila (strain Philadelphia 1 / ATCC 33152 / DSM 7513), this protein is Translation initiation factor IF-2.